The sequence spans 2197 residues: MALPRLTGALRSFSNVTKQDNYNEEVADLKLKRSKLHEQALDFGLSWKKIVKFLNEKLEKNKMQTINEDLKDILQAAKQIVGTDNGNEAIESGAAFLFMTFHMTDSVGYTETKAIRQMFGPFPSSSATSACNATSRIISHFSQDDLTALVQATENQCNDRVVFGRNLAFSFDMHDLDHFDELPVNGEAQKTISLDYKKFLNEQFQEPYTPELKPVEKSNGSLLWCEVEKYLNATLKEMTEAPRVEDLCCTLYDMLASAKSGDELQDELFELLGPGGLDLIEKLLQNRITIVDRFLNSSSDHKFQVLQDNCKKILGENAKPNYGCQVTIQSEQEKQLMKQYRREEKRIARREKKAGEDGEVSGEGLLPFDPKELRLQREHALLNARSAPILGRQRDTEVEKIRYPHVYDSQAAARETSAFIAGAKMILPEGIQRENTKLYEEVRIPYSEPMPVGFEEKPVYIQDLDEVGQLAFKGMKRLNRIQSIVFDTAYNTNENMLICAPTGAGKTNIAMLTVLHEIRQHFHQGVLKKNEFKIVYVAPMKALAAEMTNYFSKRLEPLGIVVKELTGDMQLSKSEILRTQMLVTTPEKWDVVTRKSVGDVALSQIVKLLILDEVHLLHEDRGPVLESIVARTLRQVESTQSMIRILGLSATLPNYLDVATFLHVNPYIGLFYFDGRFRPVPLGQTFLGIKSANKMQQLNNMDEVCYESVLKQVKAGHQVMVFVHARNATVRTAMSLIERAKNSGQISCFLPTQGPEYGHALKQVQKSRNKQVRELFSDGFSIHHAGMLRQDRNLVENLFSNGHIKVLVCTATLAWGVNLPAHAVIIKGTQIYAAKRGSFVDLGILDVMQIFGRAGRPQFDKFGEGIIITTHDKLSHYLSLLTQQNPIESQFLESLADNLNAEIALGTVTNVEEAVKWMSYTYLYVRMRANPLAYGISHKAYQMDPTLRKHREQLLIEVGQKLDKARMIRFEERTGYFSSTDLGRTASHYYIKYNTIETFNELFDAHKTEGDIFAIVSKAEEFDQIKVREEEIEELDALLNNFCELSAPGGVENSYGKINILLQTYISRGEMDSFSLISDSAYVAQNAARIVRALFEIALRKRWPTMTYRLLNLSKVIDKRLWGWASPLRQFSVLPPHILTRLEEKNLTVDKLKDMRKDEIGHILHHVNIGLKVKQCVHQIPSVTMEASIQPITRTVLRVSLNIYPDFSWNDQVHGTVGEPWWIWVEDPTNDHIYHSEYFLALKKQVINKEAQLLVFTIPIFEPLPSQYYIRAVSDRWLGAEAVCIINFQHLILPERHPPHTELLDLQPLPVTALGCKAYEALYNFSHFNPVQTQIFHTLYHTDCNVLLGAPTGSGKTVAAELAIFRVFNKYPTSKAVYIAPLKALVRERMDDWKIRIEEKLGKKVIELTGDVTPDMKSIAKADLIVTTPEKWDGVSRSWQNRSYVQQVNILIIDEIHLLGEERGPVLEVIVSRTNFISSHTEKPVRIVGLSTALANARDLADWLNIKQMGLFNFRPSVRPVPLEVHIQGFPGQHYCPRMASMNKPAFQESHTHCPDRPCLLLPERMLSSMTKLELIAFLATEEDPKQWLNMDEQEMENIIATVRDSNLKLTLAFGIGMHHAGLHERDRKTVEELFVNCKVQVLIATSTLAWGVNFPAHLVIIKGTEYYDGKTRRYVDFPITDVLQMMGRAGRPQFDDQGKAVILVHDIKKDFYKKFLYEPFPVESSLLGVLSDHLNAEIAGGTITSKQDALDYITWTYFFRRLIMNPSYYNLGDVSQDAINKFLSHLIGQSLVELELSHCIEVGEDNRSIEPLTCGRIASYYYLKHKTVKMFKDRLKPECSTEELLSILSDAEEYTDLPVRHNEDHTNNELAKCLPIELNPHSFDSPHTKAHLLLQAHLSRAMLPCPDYDTDTKTVLDQALRVCQAMLDVAASQGWLVTTLNITHLIQMVIQGRWLKDSSLLTIPNIEQHHLHLFRKWKPPVKGPHAKCRTSIECLPELIHACEGKEHVFSSMVEKELQPAKTKQAWNFLSHLPVINVGISVKGSWDDSVEGHNELSISTLTADKRDENTWIKLHADQQYVLQVSLQRVHFEFHKVKHESHAVTPRFPKLKDEGWFLILGEVDKRELVAVKRVGFVRTHHEASISFFTPEAPGRYIFTLYLMSDCYLGLDQQYDIFLNVTKADISTQINTEVPDVST.

Residue Ser-12 is modified to Phosphoserine. Coiled-coil stretches lie at residues Lys-18–Ile-80 and Ile-328–Glu-356. The region spanning Asp-487 to Leu-670 is the Helicase ATP-binding 1 domain. An ATP-binding site is contributed by Ala-500 to Thr-507. Lys-573 carries the N6-acetyllysine modification. A DEVH box motif is present at residues Asp-612 to His-615. A Helicase C-terminal 1 domain is found at Gln-697 to Val-915. The SEC63 1 domain occupies Ser-979–Phe-1288. Residues His-1337–Phe-1512 form the Helicase ATP-binding 2 domain. Position 1350-1357 (Ala-1350–Thr-1357) interacts with ATP. The DEIH box signature appears at Asp-1454–His-1457. The Helicase C-terminal 2 domain occupies Arg-1565 to Ile-1739. The SEC63 2 domain occupies Pro-1812–Ile-2175.

The protein belongs to the helicase family. As to quaternary structure, identified in the ASCC complex that contains ASCC1, ASCC2 and ASCC3. Functions as a scaffolding subunit that interacts directly with both ASCC1 and ASCC2. Interacts directly with ALKBH3, and thereby recruits ALKBH3 to the ASCC complex. Part of the ASC-1/TRIP4 complex, that contains TRIP4, ASCC1, ASCC2 and ASCC3. Part of the RQT (ribosome quality control trigger) complex, that contains ASCC2, ASCC3 and TRIP4. Associates with ribosomes; recruited to collided ribosomes. Interacts with ZCCHC4. Interacts with ZNF598. Interacts with RPS3.

The protein localises to the nucleus. It localises to the nucleus speckle. Its subcellular location is the cytoplasm. It is found in the cytosol. It catalyses the reaction Couples ATP hydrolysis with the unwinding of duplex DNA by translocating in the 3'-5' direction.. The enzyme catalyses ATP + H2O = ADP + phosphate + H(+). In terms of biological role, ATPase involved both in DNA repair and rescue of stalled ribosomes. 3'-5' DNA helicase involved in repair of alkylated DNA: promotes DNA unwinding to generate single-stranded substrate needed for ALKBH3, enabling ALKBH3 to process alkylated N3-methylcytosine (3mC) within double-stranded regions. Also involved in activation of the ribosome quality control (RQC) pathway, a pathway that degrades nascent peptide chains during problematic translation. Drives the splitting of stalled ribosomes that are ubiquitinated in a ZNF598-dependent manner, as part of the ribosome quality control trigger (RQT) complex. Part of the ASC-1 complex that enhances NF-kappa-B, SRF and AP1 transactivation. The chain is Activating signal cointegrator 1 complex subunit 3 (Ascc3) from Rattus norvegicus (Rat).